A 457-amino-acid chain; its full sequence is tRNA-2-methylthio-N(6)-dimethylallyladenosine synthase (457 aa).

The 118-residue stretch at 3-120 (KKVYVKTFGC…LPQMIDARRE (118 aa)) folds into the MTTase N-terminal domain. 6 residues coordinate [4Fe-4S] cluster: Cys12, Cys49, Cys83, Cys157, Cys161, and Cys164. The Radical SAM core domain occupies 143–377 (RVEGPSAFVS…QATIEENVAR (235 aa)). The TRAM domain maps to 380–447 (QSMLGKVERI…PHSLRGELVL (68 aa)).

This sequence belongs to the methylthiotransferase family. MiaB subfamily. Monomer. It depends on [4Fe-4S] cluster as a cofactor.

It localises to the cytoplasm. The catalysed reaction is N(6)-dimethylallyladenosine(37) in tRNA + (sulfur carrier)-SH + AH2 + 2 S-adenosyl-L-methionine = 2-methylsulfanyl-N(6)-dimethylallyladenosine(37) in tRNA + (sulfur carrier)-H + 5'-deoxyadenosine + L-methionine + A + S-adenosyl-L-homocysteine + 2 H(+). Its function is as follows. Catalyzes the methylthiolation of N6-(dimethylallyl)adenosine (i(6)A), leading to the formation of 2-methylthio-N6-(dimethylallyl)adenosine (ms(2)i(6)A) at position 37 in tRNAs that read codons beginning with uridine. This is tRNA-2-methylthio-N(6)-dimethylallyladenosine synthase from Burkholderia mallei (strain NCTC 10247).